The following is a 513-amino-acid chain: GMP synthase [glutamine-hydrolyzing] (513 aa).

The Glutamine amidotransferase type-1 domain maps to 8 to 198 (KIIVLDYGSQ…ALNICGAKGN (191 aa)). The Nucleophile role is filled by cysteine 85. Active-site residues include histidine 172 and glutamate 174. The region spanning 199-388 (WSMENFIDMQ…LGMPDEIVWR (190 aa)) is the GMPS ATP-PPase domain. 226–232 (SGGVDSS) contacts ATP.

Homodimer.

The enzyme catalyses XMP + L-glutamine + ATP + H2O = GMP + L-glutamate + AMP + diphosphate + 2 H(+). It participates in purine metabolism; GMP biosynthesis; GMP from XMP (L-Gln route): step 1/1. In terms of biological role, catalyzes the synthesis of GMP from XMP. The protein is GMP synthase [glutamine-hydrolyzing] (guaA) of Lactococcus lactis subsp. cremoris (strain MG1363).